The following is a 77-amino-acid chain: Large ribosomal subunit protein eL20 (77 aa).

Belongs to the eukaryotic ribosomal protein eL20 family. In terms of assembly, part of the 50S ribosomal subunit. Binds 23S rRNA.

This chain is Large ribosomal subunit protein eL20, found in Thermococcus gammatolerans (strain DSM 15229 / JCM 11827 / EJ3).